A 336-amino-acid polypeptide reads, in one-letter code: Ornithine carbamoyltransferase, catabolic (336 aa).

Carbamoyl phosphate contacts are provided by residues 57–60, glutamine 84, arginine 108, and 135–138; these read STRT and HPTQ. Residues asparagine 168, aspartate 232, and 236–237 each bind L-ornithine; that span reads SM. Carbamoyl phosphate contacts are provided by residues 274 to 275 and arginine 321; that span reads CL.

Belongs to the aspartate/ornithine carbamoyltransferase superfamily. OTCase family.

Its subcellular location is the cytoplasm. It carries out the reaction carbamoyl phosphate + L-ornithine = L-citrulline + phosphate + H(+). Its pathway is amino-acid degradation; L-arginine degradation via ADI pathway; carbamoyl phosphate from L-arginine: step 2/2. In terms of biological role, reversibly catalyzes the transfer of the carbamoyl group from carbamoyl phosphate (CP) to the N(epsilon) atom of ornithine (ORN) to produce L-citrulline. In Burkholderia pseudomallei (strain K96243), this protein is Ornithine carbamoyltransferase, catabolic.